The sequence spans 104 residues: L-rhamnose mutarotase (104 aa).

A substrate-binding site is contributed by tyrosine 18. Histidine 22 acts as the Proton donor in catalysis. Substrate-binding positions include tyrosine 41 and 76–77 (WW).

This sequence belongs to the rhamnose mutarotase family. In terms of assembly, homodimer.

It localises to the cytoplasm. It carries out the reaction alpha-L-rhamnose = beta-L-rhamnose. Its pathway is carbohydrate metabolism; L-rhamnose metabolism. Involved in the anomeric conversion of L-rhamnose. The protein is L-rhamnose mutarotase of Escherichia coli (strain K12 / MC4100 / BW2952).